The sequence spans 1027 residues: MRRFLRTGHDPARERLKRDLFQFNKTVEHGFPHQPSALGYSPSLRILAIGTRSGAVKLYGAPGVEFMGLHKENNAVLQIHFLPGQCQLVTLLDDNSLHLWSLKVKGGVSELQEEESFTLRGPPGAAPSATQVTEILPHSSGELLYLGTESGNVFVVQLPGFRTLHDRTICSDEVLQWLPEEARHRRVFEMVEALQEHPRDPNQILIGYSRGLVVIWDLQGSRALSHFLSSQQLENASWQRDGCLIVTCHSDGSHCQWPVSSDTQNPEPLRSSIPYGPFPCKAITKIFWLTTRQGLPFTIFQGGMPRASYGDRHCISVVHNGQQTAFDFTSRVIDFTVLSEADPAAAFDDPYALVVLAEEELVVIDLQTPGWPPVQLPYLASLHCSAITCSHHVSNIPLKLWERIIAAGSRQNSHFSTMEWPIDGGTSLAPPPPQRDLLLTGHEDGTVRFWDASGVCLRLLYKLSTVRVFLTDTDPSENLIAQGEDEWPPLRKVGSFDPYSDDPRLGIQKIFLCKYSGYLAVAGTAGQVLVLELNDEAAEHAVEQVEADLLQDQEGYRWKGHERLAARPGPVCFEAGFQPFVLVQCQPPAVVTSLALHSEWRLVAFGTSHGFGLFDHQQRRQVFVKCTLHPSDQLALEGPLSRVKSLKKSLRQSFRRMRRSRVSSHKRRPGGPTGEAQAQAVNIKAERTGLQNMELAPVQRKIEARSAEDSFTGFVRTLYFADTYLRDSSRHCPSLWAGTNGGTVYAFSLRVPPAERRTDEPVRAEQAKEIQLMHRAPVVGILVLDGHNVPLPEPLEVAHDLSKSPDMQGSHQLLVVSEEQFKVFTLPKVSAKLKLKLTALEGSRVRRVGVAHFGSCRAEDYGEHHLAVLTNLGDIQVVSMPLLKPQVRYSCIRREDVSGIASCVFTKYGQGFYLISPSEFERFSLSTKWLVEPRCLVDSTKAKKHNRPSNGNGTGLKMTSSGHVRNSKSQSDGDEKKPGPVMEHALLNDAWVLKEIQSTLEGDRRSYGNWHPHRVAVGCRLSNGEAE.

10 WD repeats span residues 36-69, 76-117, 132-169, 193-227, 233-268, 282-324, 332-366, 388-464, 508-583, and 592-653; these read SALG…FMGL, VLQI…EESF, VTEI…DRTI, ALQE…LSHF, LENA…NPEP, AITK…GQQT, VIDF…VIDL, TCSH…YKLS, QKIF…FVLV, and TSLA…LRQS. Residue Ser-653 is modified to Phosphoserine. The span at 654–669 shows a compositional bias: basic residues; that stretch reads FRRMRRSRVSSHKRRP. The interval 654-678 is disordered; it reads FRRMRRSRVSSHKRRPGGPTGEAQA. 4 WD repeats span residues 715–771, 780–832, 837–890, and 904–927; these read VRTL…KEIQ, GILV…VSAK, LTAL…VRYS, and VFTK…SLST. The disordered stretch occupies residues 940–981; that stretch reads TKAKKHNRPSNGNGTGLKMTSSGHVRNSKSQSDGDEKKPGPV. Residues 957–970 show a composition bias toward polar residues; sequence KMTSSGHVRNSKSQ. Residues Ser-971 and Ser-1022 each carry the phosphoserine modification.

This sequence belongs to the WD repeat L(2)GL family. Interacts with GPSM2/LGN, PRKCI/aPKC and PARD6B/Par-6. The complex is enhanced during mitosis. Interacts with DCAF1. Phosphorylated at Ser-653 by PRKCI. Phosphorylation is enhanced during cell polarization induced by calcium. Phosphorylation may occur during the cell-cell contact-induced cell polarization and may contribute to the segregation of LLGL2 from the PRKCI/aPKC and PARD6B/Par-6 complex.

The protein localises to the cytoplasm. In terms of biological role, part of a complex with GPSM2/LGN, PRKCI/aPKC and PARD6B/Par-6, which may ensure the correct organization and orientation of bipolar spindles for normal cell division. This complex plays roles in the initial phase of the establishment of epithelial cell polarity. The sequence is that of LLGL scribble cell polarity complex component 2 (Llgl2) from Mus musculus (Mouse).